Here is a 182-residue protein sequence, read N- to C-terminus: Large ribosomal subunit protein uL5 (182 aa).

It belongs to the universal ribosomal protein uL5 family. Part of the 50S ribosomal subunit; part of the 5S rRNA/L5/L18/L25 subcomplex. Contacts the 5S rRNA and the P site tRNA. Forms a bridge to the 30S subunit in the 70S ribosome.

This is one of the proteins that bind and probably mediate the attachment of the 5S RNA into the large ribosomal subunit, where it forms part of the central protuberance. In the 70S ribosome it contacts protein S13 of the 30S subunit (bridge B1b), connecting the 2 subunits; this bridge is implicated in subunit movement. Contacts the P site tRNA; the 5S rRNA and some of its associated proteins might help stabilize positioning of ribosome-bound tRNAs. The polypeptide is Large ribosomal subunit protein uL5 (Trichormus variabilis (strain ATCC 29413 / PCC 7937) (Anabaena variabilis)).